A 356-amino-acid chain; its full sequence is Nicotinate-nucleotide--dimethylbenzimidazole phosphoribosyltransferase (356 aa).

Glutamate 317 serves as the catalytic Proton acceptor.

The protein belongs to the CobT family. Homodimer.

The enzyme catalyses 5,6-dimethylbenzimidazole + nicotinate beta-D-ribonucleotide = alpha-ribazole 5'-phosphate + nicotinate + H(+). Its pathway is nucleoside biosynthesis; alpha-ribazole biosynthesis; alpha-ribazole from 5,6-dimethylbenzimidazole: step 1/2. Its function is as follows. Catalyzes the synthesis of alpha-ribazole-5'-phosphate from nicotinate mononucleotide (NAMN) and 5,6-dimethylbenzimidazole (DMB). The sequence is that of Nicotinate-nucleotide--dimethylbenzimidazole phosphoribosyltransferase from Salmonella paratyphi C (strain RKS4594).